Consider the following 556-residue polypeptide: Polyphenol oxidase 2 (556 aa).

Residues H57, H81, H90, H250, H254, and H282 each coordinate Cu cation. A cross-link (2'-(S-cysteinyl)-histidine (Cys-His)) is located at residues 79–81 (CTH). H254 contributes to the substrate binding site. Residues 379 to 556 (SKPSSGARNT…FDDVAVHVIN (178 aa)) constitute a propeptide, removed in mature form.

Belongs to the tyrosinase family. In terms of assembly, heterotetramer. Cu(2+) serves as cofactor. The C-ter is probably cleaved after Gly-378 since the mature active protein is smaller than the protein encoded by the gene.

The catalysed reaction is 2 L-dopa + O2 = 2 L-dopaquinone + 2 H2O. It carries out the reaction L-tyrosine + O2 = L-dopaquinone + H2O. Its function is as follows. Copper-containing oxidase that catalyzes both the o-hydroxylation of monophenols and the subsequent oxidation of the resulting o-diphenols into reactive o-quinones, which evolve spontaneously to produce intermediates, which associate in dark brown pigments. Involved in the initial step of melanin synthesis. Melanins constitute a mechanism of defense and resistance to stress such as UV radiations, free radicals, gamma rays, dehydratation and extreme temperatures, and contribute to the fungal cell-wall resistance against hydrolytic enzymes in avoiding cellular lysis. Fungal pigments are also involved in the formation and stability of spores. This Agaricus bisporus (White button mushroom) protein is Polyphenol oxidase 2 (PPO2).